The chain runs to 1009 residues: Membrane alanyl aminopeptidase (1009 aa).

Residues 1–15 (MAAIKLLVLSLACAC) form the signal peptide. A propeptide spans 16-52 (VIAHSPIPPASRTIFLDERLEGGAFENIDAFENIELS) (activation peptide). 338-342 (GAMEN) is a binding site for substrate. His-374 is a binding site for Zn(2+). The active-site Proton acceptor is the Glu-375. Positions 378 and 397 each coordinate Zn(2+). Residue Asn-906 is glycosylated (N-linked (GlcNAc...) asparagine). The interval 955-980 (PSTSTTSTTAAPTTVTQPTITEPSTP) is disordered. Asp-987 carries GPI-anchor amidated aspartate lipidation. A propeptide spans 988–1009 (SAMTSFASLFIISLGAILHLIL) (removed in mature form).

It belongs to the peptidase M1 family. Requires Zn(2+) as cofactor.

Its subcellular location is the cell membrane. Functionally, binds to the B.thuringiensis toxin, CryIA(C). The polypeptide is Membrane alanyl aminopeptidase (Heliothis virescens (Tobacco budworm moth)).